The sequence spans 246 residues: Small ribosomal subunit protein uS2 (246 aa).

Belongs to the universal ribosomal protein uS2 family.

This is Small ribosomal subunit protein uS2 from Burkholderia vietnamiensis (strain G4 / LMG 22486) (Burkholderia cepacia (strain R1808)).